The following is a 237-amino-acid chain: Nodulation protein NolA (237 aa).

The HTH merR-type domain maps to R10–G79. A DNA-binding region (H-T-H motif) is located at residues I13–H32.

Its function is as follows. Involved in genotype-specific nodulation of soybeans. The protein is Nodulation protein NolA (nolA) of Bradyrhizobium diazoefficiens (strain JCM 10833 / BCRC 13528 / IAM 13628 / NBRC 14792 / USDA 110).